The primary structure comprises 365 residues: Succinyl-diaminopimelate desuccinylase (365 aa).

His64 provides a ligand contact to Zn(2+). Asp66 is a catalytic residue. Asp95 contributes to the Zn(2+) binding site. The active-site Proton acceptor is Glu125. Zn(2+) contacts are provided by Glu126, Glu154, and His339.

Belongs to the peptidase M20A family. DapE subfamily. Homodimer. Zn(2+) is required as a cofactor. The cofactor is Co(2+).

It catalyses the reaction N-succinyl-(2S,6S)-2,6-diaminopimelate + H2O = (2S,6S)-2,6-diaminopimelate + succinate. The protein operates within amino-acid biosynthesis; L-lysine biosynthesis via DAP pathway; LL-2,6-diaminopimelate from (S)-tetrahydrodipicolinate (succinylase route): step 3/3. Functionally, catalyzes the hydrolysis of N-succinyl-L,L-diaminopimelic acid (SDAP), forming succinate and LL-2,6-diaminopimelate (DAP), an intermediate involved in the bacterial biosynthesis of lysine and meso-diaminopimelic acid, an essential component of bacterial cell walls. In Nautilia profundicola (strain ATCC BAA-1463 / DSM 18972 / AmH), this protein is Succinyl-diaminopimelate desuccinylase.